The sequence spans 274 residues: Nitrate import ATP-binding protein NrtD (274 aa).

The 234-residue stretch at 17–250 folds into the ABC transporter domain; the sequence is LHFDCVGKTF…RPREREAVVE (234 aa). Residue 53–60 participates in ATP binding; that stretch reads GHSGCGKS.

Belongs to the ABC transporter superfamily. Nitrate/nitrite/cyanate uptake transporter (NitT) (TC 3.A.1.16) family. The complex is composed of two ATP-binding proteins (NrtC and NrtD), two transmembrane proteins (NrtB) and a solute-binding protein (NrtA).

The protein resides in the cell inner membrane. The enzyme catalyses nitrate(out) + ATP + H2O = nitrate(in) + ADP + phosphate + H(+). In terms of biological role, part of the ABC transporter complex NrtABCD involved in nitrate uptake. The complex is probably also involved in nitrite transport. Probably responsible for energy coupling to the transport system. In Synechococcus elongatus (strain ATCC 33912 / PCC 7942 / FACHB-805) (Anacystis nidulans R2), this protein is Nitrate import ATP-binding protein NrtD.